The primary structure comprises 295 residues: Hydroxylase/desaturase efuI (295 aa).

This sequence belongs to the asaB hydroxylase/desaturase family.

It functions in the pathway secondary metabolite biosynthesis; terpenoid biosynthesis. Functionally, hydroxylase/desaturase; part of the gene cluster that mediates the biosynthesis of enfumafungin, a glycosylated fernene-type triterpenoid with potent antifungal activity, mediated by its interaction with beta-1,3-glucan synthase and the fungal cell wall. The pathway begins with the terpene cyclase-glycosyl transferase fusion protein that most likely uses 2,3-oxidosqualene as substrate and catalyzes glycosylation immediately after cyclization. The fernene glycoside then could be processed by the desaturase efuI which catalyzes isomerization of a double bond established by efuA to form the core structure. The latter would then undergo a series of hydroxylations in unknown order at C-2, C-19, C-23 and C-25, which would be catalyzed by two of the three cytochrome P450 monooxygenases efuB, efuG or efuH. The hydroxy-group at C-25 becomes oxidized by the dehydrogenase efuE to enable a spontaneous, non-enzymatic hemiacetal formation with C-23. After hydroxylation at C-2, acetylation by the acetyltransferase efuC takes place. The final steps in enfumafungin biosynthesis require expansion of the 5-membered ring by lactonization via a Baeyer-Villiger reaction mediated by one of the BGC's cytochrome P450 monooxygenases (efuB, efuG or efuH) followed by ring cleavage. This type of reaction would establish a double bond between C-20 and C-21 which could be reduced by the reductase efuL to form the final product. This is Hydroxylase/desaturase efuI from Hormonema carpetanum.